A 198-amino-acid polypeptide reads, in one-letter code: Zinc finger protein 41 homolog (198 aa).

Residues 1-12 (MEKPAGRKKKTP) are compositionally biased toward basic residues. Residues 1-55 (MEKPAGRKKKTPTPREEADVQKSALREEKVSGDRKPPERPTVPRKPRTEPCLSPE) form a disordered region. Residues 13–38 (TPREEADVQKSALREEKVSGDRKPPE) are compositionally biased toward basic and acidic residues. 4 C2H2-type zinc fingers span residues 87–109 (YECSECGRIFKHKTDHIRHQRVH), 115–137 (FKCAQCGKAFRHSSDVTKHQRTH), 143–165 (FKCGECGKAFNCGSNLLKHQKTH), and 171–193 (YECTHCGKAFAYSSCLIRHQKRH).

It belongs to the krueppel C2H2-type zinc-finger protein family.

It is found in the nucleus. In terms of biological role, a putative DNA-binding regulatory protein associated with meiosis in spermatogenesis. The protein is Zinc finger protein 41 homolog (ZFP41) of Homo sapiens (Human).